The following is an 859-amino-acid chain: Probable helicase A859L (859 aa).

A Helicase ATP-binding domain is found at 178-349; the sequence is YQELRRSGRA…KNRELFGGVA (172 aa). 191–198 provides a ligand contact to ATP; that stretch reads MACRCGKT. The DEAH box signature appears at 298–301; the sequence is DECH. A Helicase C-terminal domain is found at 401 to 553; sequence HLKTNITAPK…RFYEHLLNPS (153 aa).

It belongs to the asfivirus helicase A859L family.

The chain is Probable helicase A859L from African swine fever virus (isolate Tick/South Africa/Pretoriuskop Pr4/1996) (ASFV).